A 723-amino-acid polypeptide reads, in one-letter code: Methionine--tRNA ligase (723 aa).

The 'HIGH' region motif lies at Pro-11 to His-21. The Zn(2+) site is built by Cys-143, Cys-146, Cys-156, and Cys-159. Residues Lys-344–Ser-348 carry the 'KMSKS' region motif. Thr-347 serves as a coordination point for ATP. In terms of domain architecture, tRNA-binding spans Asp-623 to Arg-723.

The protein belongs to the class-I aminoacyl-tRNA synthetase family. MetG type 1 subfamily. Homodimer. Zn(2+) serves as cofactor.

The protein localises to the cytoplasm. The catalysed reaction is tRNA(Met) + L-methionine + ATP = L-methionyl-tRNA(Met) + AMP + diphosphate. Its function is as follows. Is required not only for elongation of protein synthesis but also for the initiation of all mRNA translation through initiator tRNA(fMet) aminoacylation. This Pyrococcus horikoshii (strain ATCC 700860 / DSM 12428 / JCM 9974 / NBRC 100139 / OT-3) protein is Methionine--tRNA ligase.